A 2115-amino-acid chain; its full sequence is Non-reducing polyketide synthase ascC (2115 aa).

Residues 1–21 are disordered; sequence MTLIQTKHSASAAVFSPQSTA. An N-terminal acylcarrier protein transacylase domain (SAT) region spans residues 14 to 260; sequence VFSPQSTAPK…HNSRNTELAQ (247 aa). Residues 381 to 805 enclose the Ketosynthase family 3 (KS3) domain; the sequence is PDSIAIVGSA…GSNSALICSE (425 aa). Catalysis depends on for beta-ketoacyl synthase activity residues cysteine 553, histidine 689, and histidine 728. The segment at 908 to 1210 is malonyl-CoA:ACP transacylase (MAT) domain; it reads LTFSGQSRTT…ANPSAHTFQA (303 aa). Serine 995 acts as the For acyl/malonyl transferase activity in catalysis. The N-terminal hotdog fold stretch occupies residues 1280–1406; it reads PKKVQQLVTL…GDFFATSGEM (127 aa). The 302-residue stretch at 1280–1581 folds into the PKS/mFAS DH domain; it reads PKKVQQLVTL…FMRIKAAKLE (302 aa). The segment at 1285–1580 is product template (PT) domain; it reads QLVTLKKTEG…QFMRIKAAKL (296 aa). Histidine 1315 serves as the catalytic Proton acceptor; for dehydratase activity. The C-terminal hotdog fold stretch occupies residues 1428–1581; the sequence is DAERLRTATA…FMRIKAAKLE (154 aa). Aspartate 1492 (proton donor; for dehydratase activity) is an active-site residue. Positions 1587–1624 are disordered; that stretch reads ANPGSKTKSTNGNALPSVPRSVPAGPTSAPQQVAPTTM. Over residues 1588 to 1600 the composition is skewed to polar residues; sequence NPGSKTKSTNGNA. A Carrier domain is found at 1640-1724; that stretch reads PSKIADLKSL…PTAALTEGLV (85 aa). Serine 1674 carries the O-(pantetheine 4'-phosphoryl)serine modification. The span at 1734-1748 shows a compositional bias: polar residues; it reads SDSIRNSTGFHTTIP. Residues 1734 to 1767 are disordered; it reads SDSIRNSTGFHTTIPATPAELHSNPPDSLDGSTV. The interval 1777-2107 is thioesterase (TE) domain; it reads ARFKLDTMVY…YDFLLGELEN (331 aa). Residues serine 1897 and aspartate 2045 each act as for thioesterase activity in the active site.

The enzyme catalyses 3 malonyl-CoA + acetyl-CoA + 2 H(+) = orsellinate + 3 CO2 + 4 CoA. It functions in the pathway secondary metabolite biosynthesis; terpenoid biosynthesis. Its function is as follows. Non-reducing polyketide synthase; part of the asc-1 gene cluster that mediates the biosynthesis of both ascochlorin and ascofuranone, a strong inhibitor of cyanide-insensitive alternative oxidases and a promising drug candidate against African trypanosomiasis. The first step in the pathway is performed by the non-reducing polyketide synthase ascC that produces orsellinic acid by condensing acetyl-CoA with 3 malonyl-CoA units. Orsellinic acid is then prenylated by the prenyltransferase ascA to yield ilicicolinic acid B. Ilicicolinic acid B is further reduced to ilicicolin B by the reductase ascB. The halogenase ascD then chlorinates ilicicolin B to produce ilicicolin A which is converted to ilicicolin A epoxide by the cytochrome P450 monooxygenase ascE that catalyzes stereoselective epoxidation of the terminal double bond of the prenyl group. Ilicicolin A epoxide is the last common precursor for the biosynthesis of ascofuranone and ascochlorin. The terpene cyclase ascF produces a monocyclic terpene, and the cyclization reaction is proposed to be initiated by protonation of the terminal epoxide of ilicicolin A epoxide to generate a monocyclic tertiarycation, which is followed by a series of hydride and methyl shifts with abstraction of proton, leading to the formation of the (14S,15R,19R)-trimethylcyclohexanone ring structure of ilicicolin C, which is finally reduced to ascochlorin by the dehydrogenase ascG. On the other hand, ilicicolin A epoxide is hydroxylated by the cytochrome P450 monooxygenase ascH, and the resultant product is cyclized by the terpene cyclase ascI to ascofuranol via protonation-initiated epoxide ring opening, which facilitates the 6-endo-tet cyclization to form the tetrahy-drofuran ring. Finally, ascofuranol is oxidized into ascofuranone by ascJ. The sequence is that of Non-reducing polyketide synthase ascC from Acremonium egyptiacum (Oospora egyptiaca).